The primary structure comprises 85 residues: Large ribosomal subunit protein bL27 (85 aa).

A disordered region spans residues 1 to 24 (MAHKKGQGSSRNGRDSNAQRRGVK).

This sequence belongs to the bacterial ribosomal protein bL27 family.

The polypeptide is Large ribosomal subunit protein bL27 (Syntrophus aciditrophicus (strain SB)).